The primary structure comprises 632 residues: 1-deoxy-D-xylulose-5-phosphate synthase (632 aa).

A disordered region spans residues 1–25 (MPTTFHEIPRKRPTTPLLDRANTPD). Residues H87 and 128–130 (GHS) each bind thiamine diphosphate. D159 is a binding site for Mg(2+). Residues 160-161 (GA), N188, F295, and E378 each bind thiamine diphosphate. N188 provides a ligand contact to Mg(2+).

It belongs to the transketolase family. DXPS subfamily. Homodimer. It depends on Mg(2+) as a cofactor. Requires thiamine diphosphate as cofactor.

The enzyme catalyses D-glyceraldehyde 3-phosphate + pyruvate + H(+) = 1-deoxy-D-xylulose 5-phosphate + CO2. It participates in metabolic intermediate biosynthesis; 1-deoxy-D-xylulose 5-phosphate biosynthesis; 1-deoxy-D-xylulose 5-phosphate from D-glyceraldehyde 3-phosphate and pyruvate: step 1/1. Catalyzes the acyloin condensation reaction between C atoms 2 and 3 of pyruvate and glyceraldehyde 3-phosphate to yield 1-deoxy-D-xylulose-5-phosphate (DXP). This is 1-deoxy-D-xylulose-5-phosphate synthase from Pseudomonas fluorescens (strain Pf0-1).